A 196-amino-acid polypeptide reads, in one-letter code: GTP cyclohydrolase 1 (196 aa).

Residues cysteine 84, histidine 87, and cysteine 157 each coordinate Zn(2+).

This sequence belongs to the GTP cyclohydrolase I family. In terms of assembly, toroid-shaped homodecamer, composed of two pentamers of five dimers.

It catalyses the reaction GTP + H2O = 7,8-dihydroneopterin 3'-triphosphate + formate + H(+). It participates in cofactor biosynthesis; 7,8-dihydroneopterin triphosphate biosynthesis; 7,8-dihydroneopterin triphosphate from GTP: step 1/1. The sequence is that of GTP cyclohydrolase 1 from Corynebacterium glutamicum (strain R).